The sequence spans 583 residues: 2-succinyl-5-enolpyruvyl-6-hydroxy-3-cyclohexene-1-carboxylate synthase (583 aa).

Belongs to the TPP enzyme family. MenD subfamily. Homodimer. Mg(2+) serves as cofactor. It depends on Mn(2+) as a cofactor. Thiamine diphosphate is required as a cofactor.

It catalyses the reaction isochorismate + 2-oxoglutarate + H(+) = 5-enolpyruvoyl-6-hydroxy-2-succinyl-cyclohex-3-ene-1-carboxylate + CO2. Its pathway is quinol/quinone metabolism; 1,4-dihydroxy-2-naphthoate biosynthesis; 1,4-dihydroxy-2-naphthoate from chorismate: step 2/7. It participates in quinol/quinone metabolism; menaquinone biosynthesis. Its function is as follows. Catalyzes the thiamine diphosphate-dependent decarboxylation of 2-oxoglutarate and the subsequent addition of the resulting succinic semialdehyde-thiamine pyrophosphate anion to isochorismate to yield 2-succinyl-5-enolpyruvyl-6-hydroxy-3-cyclohexene-1-carboxylate (SEPHCHC). This is 2-succinyl-5-enolpyruvyl-6-hydroxy-3-cyclohexene-1-carboxylate synthase from Chlorobium chlorochromatii (strain CaD3).